The chain runs to 250 residues: tRNA (guanine-N(1)-)-methyltransferase (250 aa).

Residues G114 and 134 to 139 (IGDYVL) contribute to the S-adenosyl-L-methionine site.

This sequence belongs to the RNA methyltransferase TrmD family. In terms of assembly, homodimer.

It is found in the cytoplasm. It carries out the reaction guanosine(37) in tRNA + S-adenosyl-L-methionine = N(1)-methylguanosine(37) in tRNA + S-adenosyl-L-homocysteine + H(+). In terms of biological role, specifically methylates guanosine-37 in various tRNAs. The chain is tRNA (guanine-N(1)-)-methyltransferase from Moorella thermoacetica (strain ATCC 39073 / JCM 9320).